The chain runs to 98 residues: Small ribosomal subunit protein eS24 (98 aa).

Belongs to the eukaryotic ribosomal protein eS24 family.

The polypeptide is Small ribosomal subunit protein eS24 (Thermococcus gammatolerans (strain DSM 15229 / JCM 11827 / EJ3)).